Reading from the N-terminus, the 240-residue chain is Homeobox protein goosecoid (240 aa).

A DNA-binding region (homeobox) is located at residues 146-205 (KRRHRTIFTDEQLEALENLFQETKYPDVGTREQLARKVHLREEKVEVWFKNRRAKWRRQK). A disordered region spans residues 199 to 240 (AKWRRQKRSSSEESENSQKWNKSTKTTSEKIEEGKSDVDSDS). Over residues 225–240 (TSEKIEEGKSDVDSDS) the composition is skewed to basic and acidic residues.

This sequence belongs to the paired homeobox family. Bicoid subfamily.

The protein resides in the nucleus. This Danio rerio (Zebrafish) protein is Homeobox protein goosecoid (gsc).